The primary structure comprises 183 residues: Segregation and condensation protein B (183 aa).

Belongs to the ScpB family. In terms of assembly, homodimer. Homodimerization may be required to stabilize the binding of ScpA to the Smc head domains. Component of a cohesin-like complex composed of ScpA, ScpB and the Smc homodimer, in which ScpA and ScpB bind to the head domain of Smc. The presence of the three proteins is required for the association of the complex with DNA.

It is found in the cytoplasm. In terms of biological role, participates in chromosomal partition during cell division. May act via the formation of a condensin-like complex containing Smc and ScpA that pull DNA away from mid-cell into both cell halves. The chain is Segregation and condensation protein B from Streptococcus pyogenes serotype M1.